Reading from the N-terminus, the 182-residue chain is ATP synthase subunit b, chloroplastic (182 aa).

The chain crosses the membrane as a helical span at residues 29–47 (IINLALLIVLVINVAKDVL).

This sequence belongs to the ATPase B chain family. As to quaternary structure, F-type ATPases have 2 components, F(1) - the catalytic core - and F(0) - the membrane proton channel. F(1) has five subunits: alpha(3), beta(3), gamma(1), delta(1), epsilon(1). F(0) has four main subunits: a(1), b(1), b'(1) and c(10-14). The alpha and beta chains form an alternating ring which encloses part of the gamma chain. F(1) is attached to F(0) by a central stalk formed by the gamma and epsilon chains, while a peripheral stalk is formed by the delta, b and b' chains.

It localises to the plastid. The protein resides in the chloroplast thylakoid membrane. In terms of biological role, f(1)F(0) ATP synthase produces ATP from ADP in the presence of a proton or sodium gradient. F-type ATPases consist of two structural domains, F(1) containing the extramembraneous catalytic core and F(0) containing the membrane proton channel, linked together by a central stalk and a peripheral stalk. During catalysis, ATP synthesis in the catalytic domain of F(1) is coupled via a rotary mechanism of the central stalk subunits to proton translocation. Component of the F(0) channel, it forms part of the peripheral stalk, linking F(1) to F(0). The chain is ATP synthase subunit b, chloroplastic from Heterosigma akashiwo (strain NIES-293 / 8280G21-1).